Reading from the N-terminus, the 323-residue chain is Acetyl-coenzyme A carboxylase carboxyl transferase subunit alpha (323 aa).

One can recognise a CoA carboxyltransferase C-terminal domain in the interval 39-293 (RLSKKSQQLT…RRALADSLRQ (255 aa)).

It belongs to the AccA family. In terms of assembly, acetyl-CoA carboxylase is a heterohexamer composed of biotin carboxyl carrier protein (AccB), biotin carboxylase (AccC) and two subunits each of ACCase subunit alpha (AccA) and ACCase subunit beta (AccD).

The protein resides in the cytoplasm. It carries out the reaction N(6)-carboxybiotinyl-L-lysyl-[protein] + acetyl-CoA = N(6)-biotinyl-L-lysyl-[protein] + malonyl-CoA. It participates in lipid metabolism; malonyl-CoA biosynthesis; malonyl-CoA from acetyl-CoA: step 1/1. Its function is as follows. Component of the acetyl coenzyme A carboxylase (ACC) complex. First, biotin carboxylase catalyzes the carboxylation of biotin on its carrier protein (BCCP) and then the CO(2) group is transferred by the carboxyltransferase to acetyl-CoA to form malonyl-CoA. The polypeptide is Acetyl-coenzyme A carboxylase carboxyl transferase subunit alpha (Burkholderia multivorans (strain ATCC 17616 / 249)).